A 272-amino-acid polypeptide reads, in one-letter code: uncharacterized protein (272 aa).

Residues D71 and E163 contribute to the active site.

This sequence belongs to the glycosyl hydrolase 25 family.

This is an uncharacterized protein from Escherichia coli (strain K12).